We begin with the raw amino-acid sequence, 424 residues long: Poly-cysteine and histidine-tailed protein (424 aa).

A signal peptide spans 1 to 17 (MAFSTIVVLFVAAVGFG). Asn291 is a glycosylation site (N-linked (GlcNAc...) asparagine). Over residues 372-390 (VGGKKQQKDQPESEKKAEN) the composition is skewed to basic and acidic residues. The tract at residues 372 to 424 (VGGKKQQKDQPESEKKAENMPETTGNASHHQHRHHHGDSSSESHEQHHHHHHH) is disordered. N-linked (GlcNAc...) asparagine glycosylation occurs at Asn397.

Glycosylated. As to expression, expressed in larval tissues like cuticle, hypodermis and muscle (at protein level). Note=Not excreted into striated muscle fibers or nurse cell.

It localises to the secreted. Its function is as follows. Binds iron and zinc. May bind nickel. The protein is Poly-cysteine and histidine-tailed protein of Trichinella spiralis (Trichina worm).